The following is a 62-amino-acid chain: Statherin (62 aa).

Residues 1–19 (MKFLVFAFILALMVSMIGA) form the signal peptide. The interval 20–25 (DSSEEK) is hydroxyapatite-binding; inhibits crystal growth. A phosphoserine mark is found at serine 21 and serine 22. The isoglutamyl lysine isopeptide (Lys-Gln); in form cyclo-statherin Q-37 cross-link spans 25 to 56 (KFLRRIGRFGYGYGPYQPVPEQPLYPQPYQPQ). A cross-link (isoglutamyl lysine isopeptide (Lys-Gln); in form cyclo-statherin Q-39) is located at residues 25–58 (KFLRRIGRFGYGYGPYQPVPEQPLYPQPYQPQYQ). The interval 38–62 (GPYQPVPEQPLYPQPYQPQYQQYTF) is hydrophobic; inhibits precipitation of calcium phosphate salts.

Belongs to the histatin/statherin family. Post-translationally, substrate for transglutaminase-2. More than 95% of the cyclized peptide is cyclo-statherin Q-37, and less than 5% is cyclo-statherin Q-39. Cyclized forms account for about 1% of total statherin in saliva. In terms of processing, sulfated on tyrosine residues. As to expression, secreted by parotid and submandibular glands.

Its subcellular location is the secreted. In terms of biological role, salivary protein that stabilizes saliva supersaturated with calcium salts by inhibiting the precipitation of calcium phosphate salts. It also modulates hydroxyapatite crystal formation on the tooth surface. The sequence is that of Statherin (STATH) from Homo sapiens (Human).